The chain runs to 312 residues: Pollen allergen Phl p 5.0101 (312 aa).

Positions 1 to 25 (MAVHQYTVALFLAVALVAGPAASYA) are cleaved as a signal peptide.

This sequence belongs to the Poa p IX/Phl p VI allergen family.

The protein localises to the secreted. The polypeptide is Pollen allergen Phl p 5.0101 (Phleum pratense (Common timothy)).